Reading from the N-terminus, the 483-residue chain is Glutamate--tRNA ligase (483 aa).

The short motif at 9 to 19 is the 'HIGH' region element; the sequence is PSPTGNLHIGT. The 'KMSKS' region signature appears at 250-254; the sequence is KLSKR. Residue Lys-253 coordinates ATP.

This sequence belongs to the class-I aminoacyl-tRNA synthetase family. Glutamate--tRNA ligase type 1 subfamily. Monomer.

It localises to the cytoplasm. It catalyses the reaction tRNA(Glu) + L-glutamate + ATP = L-glutamyl-tRNA(Glu) + AMP + diphosphate. Its function is as follows. Catalyzes the attachment of glutamate to tRNA(Glu) in a two-step reaction: glutamate is first activated by ATP to form Glu-AMP and then transferred to the acceptor end of tRNA(Glu). The protein is Glutamate--tRNA ligase of Synechocystis sp. (strain ATCC 27184 / PCC 6803 / Kazusa).